Consider the following 118-residue polypeptide: Large ribosomal subunit protein uL18 (118 aa).

It belongs to the universal ribosomal protein uL18 family. As to quaternary structure, part of the 50S ribosomal subunit; part of the 5S rRNA/L5/L18/L25 subcomplex. Contacts the 5S and 23S rRNAs.

Functionally, this is one of the proteins that bind and probably mediate the attachment of the 5S RNA into the large ribosomal subunit, where it forms part of the central protuberance. The polypeptide is Large ribosomal subunit protein uL18 (Brachyspira hyodysenteriae (strain ATCC 49526 / WA1)).